A 1390-amino-acid polypeptide reads, in one-letter code: ABC transporter G family member 43 (1390 aa).

The tract at residues 1-22 (MTMPQTDGVEFASRNNLENGDG) is disordered. An ABC transporter 1 domain is found at 137–411 (SKLSRFTFSK…FEDCGFKCPQ (275 aa)). Residue 171–178 (GPPGCGKT) participates in ATP binding. Positions 489–701 (DMFKACSRRE…AEIGLTSNEF (213 aa)) constitute an ABC transmembrane type-2 1 domain. The next 6 membrane-spanning stretches (helical) occupy residues 507-527 (FVYV…MTVY), 541-561 (YLLG…LPEL), 594-614 (IPIS…VIGY), 626-646 (LILF…GAVF), 651-671 (VATT…GFIV), and 737-757 (FGAL…ALTF). Residues 798–1043 (FTFQDVQYFI…VIEYFMSIPG (246 aa)) enclose the ABC transporter 2 domain. 835–842 (GVSGAGKT) lines the ATP pocket. In terms of domain architecture, ABC transmembrane type-2 2 spans 1115–1329 (EQFKACLWKQ…VLNGLLTSQY (215 aa)). Transmembrane regions (helical) follow at residues 1134 to 1154 (YNLT…ILFL), 1173 to 1193 (MFTV…FCVA), 1218 to 1238 (VLVE…IVYP), 1253 to 1273 (FYSI…LVVV), 1279 to 1299 (IAFT…GYVM), 1307 to 1327 (WWIW…LLTS), and 1362 to 1382 (LVAV…AFFI).

This sequence belongs to the ABC transporter superfamily. ABCG family. PDR (TC 3.A.1.205) subfamily.

The protein localises to the membrane. Its function is as follows. May be a general defense protein. The polypeptide is ABC transporter G family member 43 (ABCG43) (Arabidopsis thaliana (Mouse-ear cress)).